We begin with the raw amino-acid sequence, 444 residues long: N-succinylarginine dihydrolase (444 aa).

Residues A19–S28, N110, and H137–R138 each bind substrate. E174 is an active-site residue. Residue R214 coordinates substrate. Residue H250 is part of the active site. Residues D252 and N362 each contribute to the substrate site. C368 serves as the catalytic Nucleophile.

It belongs to the succinylarginine dihydrolase family. As to quaternary structure, homodimer.

It catalyses the reaction N(2)-succinyl-L-arginine + 2 H2O + 2 H(+) = N(2)-succinyl-L-ornithine + 2 NH4(+) + CO2. It functions in the pathway amino-acid degradation; L-arginine degradation via AST pathway; L-glutamate and succinate from L-arginine: step 2/5. In terms of biological role, catalyzes the hydrolysis of N(2)-succinylarginine into N(2)-succinylornithine, ammonia and CO(2). In Shewanella baltica (strain OS155 / ATCC BAA-1091), this protein is N-succinylarginine dihydrolase.